The sequence spans 165 residues: Xanthine-guanine phosphoribosyltransferase (165 aa).

5-phospho-alpha-D-ribose 1-diphosphate-binding positions include 41 to 42 (RG) and 98 to 106 (DDLTDTGKT). D99 lines the Mg(2+) pocket. Guanine contacts are provided by D102 and I145. Positions 102 and 145 each coordinate xanthine. GMP is bound by residues 102–106 (DTGKT) and 144–145 (WI).

It belongs to the purine/pyrimidine phosphoribosyltransferase family. XGPT subfamily. As to quaternary structure, homotetramer. Requires Mg(2+) as cofactor.

Its subcellular location is the cell inner membrane. The catalysed reaction is GMP + diphosphate = guanine + 5-phospho-alpha-D-ribose 1-diphosphate. It catalyses the reaction XMP + diphosphate = xanthine + 5-phospho-alpha-D-ribose 1-diphosphate. The enzyme catalyses IMP + diphosphate = hypoxanthine + 5-phospho-alpha-D-ribose 1-diphosphate. It participates in purine metabolism; GMP biosynthesis via salvage pathway; GMP from guanine: step 1/1. Its pathway is purine metabolism; XMP biosynthesis via salvage pathway; XMP from xanthine: step 1/1. Functionally, purine salvage pathway enzyme that catalyzes the transfer of the ribosyl-5-phosphate group from 5-phospho-alpha-D-ribose 1-diphosphate (PRPP) to the N9 position of the 6-oxopurines guanine and xanthine to form the corresponding ribonucleotides GMP (guanosine 5'-monophosphate) and XMP (xanthosine 5'-monophosphate), with the release of PPi. To a lesser extent, also acts on hypoxanthine. This Brucella suis (strain ATCC 23445 / NCTC 10510) protein is Xanthine-guanine phosphoribosyltransferase.